Consider the following 315-residue polypeptide: AT-hook motif nuclear-localized protein 19 (315 aa).

The segment covering 1 to 25 has biased composition (polar residues); it reads MANPWWTGQVNLSGLETTPPGSSQL. 2 disordered regions span residues 1 to 104 and 239 to 285; these read MANP…RDSP and EEEA…YNMP. Residues 61–74 are compositionally biased toward basic and acidic residues; the sequence is DNLSGDDHEPREGA. A DNA-binding region (a.T hook) is located at residues 80 to 92; the sequence is RRPRGRPAGSKNK. Residues 104 to 248 form the PPC domain; sequence PNALKSHVME…EEEAAERGGG (145 aa). Residues 245-276 are compositionally biased toward gly residues; it reads RGGGGGSGGVVPGQLGGGGSPLSSGAGGGDGN.

As to expression, slightly expressed in roots.

Its subcellular location is the nucleus. Functionally, transcription factor that specifically binds AT-rich DNA sequences related to the nuclear matrix attachment regions (MARs). Negatively regulates plant innate immunity (PTI) to pathogens through the down-regulation of the PAMP-triggered FRK1 expression. Positively regulates defense against fungal Verticillium infection. The chain is AT-hook motif nuclear-localized protein 19 from Arabidopsis thaliana (Mouse-ear cress).